Reading from the N-terminus, the 688-residue chain is Glycine--tRNA ligase beta subunit (688 aa).

This sequence belongs to the class-II aminoacyl-tRNA synthetase family. As to quaternary structure, tetramer of two alpha and two beta subunits.

Its subcellular location is the cytoplasm. It catalyses the reaction tRNA(Gly) + glycine + ATP = glycyl-tRNA(Gly) + AMP + diphosphate. The polypeptide is Glycine--tRNA ligase beta subunit (glyS) (Haemophilus influenzae (strain ATCC 51907 / DSM 11121 / KW20 / Rd)).